The primary structure comprises 286 residues: Acetylglutamate kinase (286 aa).

Substrate is bound by residues 70 to 71, arginine 92, and asparagine 184; that span reads GG.

Belongs to the acetylglutamate kinase family. ArgB subfamily.

It localises to the cytoplasm. It catalyses the reaction N-acetyl-L-glutamate + ATP = N-acetyl-L-glutamyl 5-phosphate + ADP. The protein operates within amino-acid biosynthesis; L-arginine biosynthesis; N(2)-acetyl-L-ornithine from L-glutamate: step 2/4. Its function is as follows. Catalyzes the ATP-dependent phosphorylation of N-acetyl-L-glutamate. The sequence is that of Acetylglutamate kinase from Ruegeria sp. (strain TM1040) (Silicibacter sp.).